A 509-amino-acid chain; its full sequence is ESX-2 secretion system protein eccD2 (509 aa).

11 helical membrane-spanning segments follow: residues 135–155 (LTAA…VLAL), 170–190 (AMAG…WWGW), 196–216 (LFSG…ACAP), 222–242 (AAHA…IGVA), 248–268 (QTAV…VAAV), 281–301 (ICVL…ALWV), 364–384 (VQVG…WGVL), 389–409 (PWAW…ITQG), 418–438 (AVAL…KYAL), 449–469 (LWPA…ALVV), and 487–507 (VLAM…FAWL).

Belongs to the EccD/Snm4 family. As to quaternary structure, part of the ESX-2 / type VII secretion system (T7SS), which is composed of cytosolic and membrane components.

Its subcellular location is the cell membrane. This is ESX-2 secretion system protein eccD2 (eccD2) from Mycobacterium tuberculosis (strain CDC 1551 / Oshkosh).